Consider the following 375-residue polypeptide: UDP-N-acetylglucosamine--N-acetylmuramyl-(pentapeptide) pyrophosphoryl-undecaprenol N-acetylglucosamine transferase (375 aa).

Residues 13-15 (TGG), Asn124, Arg165, Ser193, and Gln294 each bind UDP-N-acetyl-alpha-D-glucosamine.

The protein belongs to the glycosyltransferase 28 family. MurG subfamily.

The protein localises to the cell inner membrane. It carries out the reaction di-trans,octa-cis-undecaprenyl diphospho-N-acetyl-alpha-D-muramoyl-L-alanyl-D-glutamyl-meso-2,6-diaminopimeloyl-D-alanyl-D-alanine + UDP-N-acetyl-alpha-D-glucosamine = di-trans,octa-cis-undecaprenyl diphospho-[N-acetyl-alpha-D-glucosaminyl-(1-&gt;4)]-N-acetyl-alpha-D-muramoyl-L-alanyl-D-glutamyl-meso-2,6-diaminopimeloyl-D-alanyl-D-alanine + UDP + H(+). The protein operates within cell wall biogenesis; peptidoglycan biosynthesis. Functionally, cell wall formation. Catalyzes the transfer of a GlcNAc subunit on undecaprenyl-pyrophosphoryl-MurNAc-pentapeptide (lipid intermediate I) to form undecaprenyl-pyrophosphoryl-MurNAc-(pentapeptide)GlcNAc (lipid intermediate II). This is UDP-N-acetylglucosamine--N-acetylmuramyl-(pentapeptide) pyrophosphoryl-undecaprenol N-acetylglucosamine transferase from Chelativorans sp. (strain BNC1).